Consider the following 266-residue polypeptide: Phosphatidate cytidylyltransferase (266 aa).

Helical transmembrane passes span 16 to 36, 52 to 72, 78 to 98, 101 to 121, 125 to 145, 164 to 184, 186 to 206, and 237 to 257; these read FVLIIVADLILYADNLLLFWA, LFQVKASFSLYLILVLSWVAA, PIECALISAMVMASVIAYQKA, SEAILPFLYPGVGFFALFGVY, GAVAIIWLLVVVVASDVGAFF, LEGALIGVVLASVLGSFVGMG, LSGGFFMALFFSFLIALVAVF, and LDSMLFGALGLHALLYFLEIW.

It belongs to the CDS family.

The protein resides in the cell inner membrane. The enzyme catalyses a 1,2-diacyl-sn-glycero-3-phosphate + CTP + H(+) = a CDP-1,2-diacyl-sn-glycerol + diphosphate. It participates in phospholipid metabolism; CDP-diacylglycerol biosynthesis; CDP-diacylglycerol from sn-glycerol 3-phosphate: step 3/3. This Helicobacter pylori (strain ATCC 700392 / 26695) (Campylobacter pylori) protein is Phosphatidate cytidylyltransferase (cdsA).